Here is a 256-residue protein sequence, read N- to C-terminus: Major prion protein (256 aa).

The N-terminal stretch at 1–24 (MVKSHIGSWILVLFVAMWSDVGLC) is a signal peptide. The tract at residues 25-233 (KKRPKPGGGW…ESEAYYQRGA (209 aa)) is interaction with GRB2, ERI3 and SYN1. The tract at residues 28-110 (PKPGGGWNTG…QWNKPSKPKT (83 aa)) is disordered. 5 repeat units span residues 54-62 (PQGGGGWGQ), 63-70 (PHGGGWGQ), 71-78 (PHGGGWGQ), 79-86 (PHGGGWGQ), and 87-95 (PHGGGGWGQ). Residues 54–95 (PQGGGGWGQPHGGGWGQPHGGGWGQPHGGGWGQPHGGGGWGQ) form a 5 X 8 AA tandem repeats of P-H-G-G-G-W-G-Q region. Residues 55-97 (QGGGGWGQPHGGGWGQPHGGGWGQPHGGGWGQPHGGGGWGQGG) are compositionally biased toward gly residues. Cu(2+) contacts are provided by histidine 64, glycine 65, glycine 66, histidine 72, glycine 73, glycine 74, histidine 80, glycine 81, glycine 82, histidine 88, glycine 90, and glycine 91. Cysteine 182 and cysteine 217 are disulfide-bonded. Asparagine 184 and asparagine 200 each carry an N-linked (GlcNAc...) asparagine glycan. A lipid anchor (GPI-anchor amidated alanine) is attached at alanine 233. Positions 234–256 (SVILFSSPPVILLISFLIFLIVG) are cleaved as a propeptide — removed in mature form.

It belongs to the prion family. Monomer and homodimer. Has a tendency to aggregate into amyloid fibrils containing a cross-beta spine, formed by a steric zipper of superposed beta-strands. Soluble oligomers may represent an intermediate stage on the path to fibril formation. Copper binding may promote oligomerization. Interacts with GRB2, APP, ERI3/PRNPIP and SYN1. Mislocalized cytosolically exposed PrP interacts with MGRN1; this interaction alters MGRN1 subcellular location and causes lysosomal enlargement. Interacts with KIAA1191.

Its subcellular location is the cell membrane. The protein localises to the golgi apparatus. In terms of biological role, its primary physiological function is unclear. Has cytoprotective activity against internal or environmental stresses. May play a role in neuronal development and synaptic plasticity. May be required for neuronal myelin sheath maintenance. May play a role in iron uptake and iron homeostasis. Soluble oligomers are toxic to cultured neuroblastoma cells and induce apoptosis (in vitro). Association with GPC1 (via its heparan sulfate chains) targets PRNP to lipid rafts. Also provides Cu(2+) or Zn(2+) for the ascorbate-mediated GPC1 deaminase degradation of its heparan sulfate side chains. This is Major prion protein (PRNP) from Cervus elaphus (Red deer).